The primary structure comprises 925 residues: Collagen alpha-2(I) chain (925 aa).

Residues 1–925 (SGGFDFSFLP…FGYEGDFYRA (925 aa)) form a disordered region. Residues proline 10 and proline 13 each carry the 4-hydroxyproline modification. The span at 22–34 (RYYGVGLGPGPMG) shows a compositional bias: gly residues. Over residues 35 to 74 (LMGPRGPPGASGAPGPQGFQGPAGEPGEPGQTGPAGARGP) the composition is skewed to low complexity. 2 positions are modified to 4-hydroxyproline: proline 42 and proline 48. Lysine 103 bears the 5-hydroxylysine; alternate mark. Lysine 103 carries an O-linked (Gal...) hydroxylysine; alternate glycan. Over residues 154-171 (DGSVGPVGPAGPIGSAGP) the composition is skewed to low complexity. The segment covering 271–280 (GESGGKGEPG) has biased composition (gly residues). Over residues 281–291 (SAGPQGPPGSS) the composition is skewed to low complexity. The span at 306-315 (GLRGGPGSRG) shows a compositional bias: gly residues. 3 positions are modified to 4-hydroxyproline: proline 317, proline 332, and proline 335. Positions 363–379 (IDGRPGPIGPAGARGEA) are enriched in low complexity. The segment covering 423-432 (GVQGGKGEQG) has biased composition (gly residues). 2 stretches are compositionally biased toward low complexity: residues 479–496 (PGESGAVGPSGAIGSRGP) and 508–518 (EPGVVGAPGTA). Gly residues predominate over residues 519 to 528 (GPAGSGGLPG). Low complexity-rich tracts occupy residues 551–595 (VGTT…PRGS) and 602–622 (VGPAGPNGFAGPAGAAGQPGA). A compositionally biased stretch (basic and acidic residues) spans 623–632 (KGERGTKGPK). A compositionally biased stretch (low complexity) spans 640-650 (PTGPVGSAGPA). Positions 660 to 669 (GSRGDGGPPG) are enriched in gly residues. The span at 671 to 680 (TGFPGAAGRT) shows a compositional bias: low complexity. Residues 696 to 718 (GAAGKGDQGPVGRGETGAGGPPG) are compositionally biased toward gly residues. Composition is skewed to low complexity over residues 719-753 (FTGEKGPSGEPGTAGPPGTAGPQGLLGAPGILGLP) and 761-771 (LPGVAGAVGEP). Over residues 772–782 (GPLGIGPPGAR) the composition is skewed to gly residues. A compositionally biased stretch (low complexity) spans 791–806 (EPGPVGSVGPVGALGP). Over residues 816 to 827 (RGDKGEPGEKGP) the composition is skewed to basic and acidic residues. Pro residues predominate over residues 897–907 (PAGPPGPPGPP).

The protein belongs to the fibrillar collagen family. As to quaternary structure, trimers of one alpha 2(I) and two alpha 1(I) chains. Interacts (via C-terminus) with TMEM131 (via PapD-L domain); the interaction is direct and is involved in assembly and TRAPPIII ER-to-Golgi transport complex-dependent secretion of collagen. Post-translationally, prolines at the third position of the tripeptide repeating unit (G-X-Y) are hydroxylated in some or all of the chains. Expressed in bones.

The protein localises to the secreted. It localises to the extracellular space. It is found in the extracellular matrix. Type I collagen is a member of group I collagen (fibrillar forming collagen). In Acratocnus sp. (strain SLP-2019) (Ground sloth), this protein is Collagen alpha-2(I) chain.